A 177-amino-acid chain; its full sequence is RNA pyrophosphohydrolase (177 aa).

Residues 6 to 149 (GYRPNVGIVI…KRDVYRRVMK (144 aa)) enclose the Nudix hydrolase domain. The Nudix box motif lies at 38-59 (GGINPGESAEQAMYRELFEEVG).

Belongs to the Nudix hydrolase family. RppH subfamily. A divalent metal cation is required as a cofactor.

Accelerates the degradation of transcripts by removing pyrophosphate from the 5'-end of triphosphorylated RNA, leading to a more labile monophosphorylated state that can stimulate subsequent ribonuclease cleavage. This Cronobacter sakazakii (strain ATCC BAA-894) (Enterobacter sakazakii) protein is RNA pyrophosphohydrolase.